Here is a 203-residue protein sequence, read N- to C-terminus: N-(5'-phosphoribosyl)anthranilate isomerase (203 aa).

Belongs to the TrpF family.

The enzyme catalyses N-(5-phospho-beta-D-ribosyl)anthranilate = 1-(2-carboxyphenylamino)-1-deoxy-D-ribulose 5-phosphate. The protein operates within amino-acid biosynthesis; L-tryptophan biosynthesis; L-tryptophan from chorismate: step 3/5. The protein is N-(5'-phosphoribosyl)anthranilate isomerase of Geotalea uraniireducens (strain Rf4) (Geobacter uraniireducens).